The chain runs to 200 residues: Dephospho-CoA kinase (200 aa).

The DPCK domain maps to 4 to 200 (VIGLTGGIAS…AILKKWNIID (197 aa)). 12 to 17 (ASGKST) contributes to the ATP binding site.

It belongs to the CoaE family.

The protein localises to the cytoplasm. The catalysed reaction is 3'-dephospho-CoA + ATP = ADP + CoA + H(+). It functions in the pathway cofactor biosynthesis; coenzyme A biosynthesis; CoA from (R)-pantothenate: step 5/5. Functionally, catalyzes the phosphorylation of the 3'-hydroxyl group of dephosphocoenzyme A to form coenzyme A. The sequence is that of Dephospho-CoA kinase from Bacillus anthracis.